A 128-amino-acid chain; its full sequence is Holin-like protein CidA (128 aa).

3 consecutive transmembrane segments (helical) span residues 23–43 (LIVE…IVIF), 58–78 (IGAL…AVGI), and 84–104 (ILAE…FVVM).

The protein belongs to the CidA/LrgA family. CidA subfamily.

It localises to the cell membrane. Its function is as follows. Increases the activity of extracellular murein hydrolases possibly by mediating their export via hole formation. Inhibited by the antiholin-like proteins LrgAB. In an unstressed cell, the LrgAB products probably inhibit the function of the CidA protein. When a cell is stressed by the addition of antibiotics or by other factors in the environment, CidA possibly oligomerizes within the bacterial cell membrane, creating lesions that disrupt the proton motive force, which in turn results in loss of cell viability. These lesions are also hypothesized to regulate the subsequent cell lysis by either allowing the murein hydrolases access to the cell wall substrate and/or regulating their activity by a possible change in the cell wall pH that results from loss of membrane potential. In Bacillus licheniformis (strain ATCC 14580 / DSM 13 / JCM 2505 / CCUG 7422 / NBRC 12200 / NCIMB 9375 / NCTC 10341 / NRRL NRS-1264 / Gibson 46), this protein is Holin-like protein CidA.